Consider the following 246-residue polypeptide: 1-(5-phosphoribosyl)-5-[(5-phosphoribosylamino)methylideneamino] imidazole-4-carboxamide isomerase (246 aa).

The active-site Proton acceptor is the aspartate 7. Aspartate 129 functions as the Proton donor in the catalytic mechanism.

The protein belongs to the HisA/HisF family.

It is found in the cytoplasm. The enzyme catalyses 1-(5-phospho-beta-D-ribosyl)-5-[(5-phospho-beta-D-ribosylamino)methylideneamino]imidazole-4-carboxamide = 5-[(5-phospho-1-deoxy-D-ribulos-1-ylimino)methylamino]-1-(5-phospho-beta-D-ribosyl)imidazole-4-carboxamide. The protein operates within amino-acid biosynthesis; L-histidine biosynthesis; L-histidine from 5-phospho-alpha-D-ribose 1-diphosphate: step 4/9. This Buchnera aphidicola subsp. Acyrthosiphon pisum (strain 5A) protein is 1-(5-phosphoribosyl)-5-[(5-phosphoribosylamino)methylideneamino] imidazole-4-carboxamide isomerase.